We begin with the raw amino-acid sequence, 117 residues long: LYR motif-containing protein 1 (117 aa).

This sequence belongs to the complex I LYR family.

This is LYR motif-containing protein 1 (lyrm1) from Dictyostelium discoideum (Social amoeba).